The sequence spans 637 residues: ATP-dependent zinc metalloprotease FtsH (637 aa).

Over 1–6 the chain is Cytoplasmic; the sequence is MNNQGR. A helical transmembrane segment spans residues 7–27; the sequence is SILAWAALFIFVILLFNVFQS. Residues 28 to 103 lie on the Periplasmic side of the membrane; that stretch reads DGLLGVRNNI…VVPLETRMNT (76 aa). A helical membrane pass occupies residues 104–124; the sequence is FLGFLISWFPMLLLIGVWVFF. The Cytoplasmic segment spans residues 125-637; sequence MRQMHGGGKA…TKAQKENIAS (513 aa). ATP is bound at residue 195 to 202; it reads GPPGTGKT. His417 serves as a coordination point for Zn(2+). The active site involves Glu418. Residues His421 and Asp495 each contribute to the Zn(2+) site. The tract at residues 617-637 is disordered; it reads DKEKLHEKTKTTKAQKENIAS.

In the central section; belongs to the AAA ATPase family. The protein in the C-terminal section; belongs to the peptidase M41 family. As to quaternary structure, homohexamer. It depends on Zn(2+) as a cofactor.

The protein localises to the cell inner membrane. Acts as a processive, ATP-dependent zinc metallopeptidase for both cytoplasmic and membrane proteins. Plays a role in the quality control of integral membrane proteins. In Rickettsia typhi (strain ATCC VR-144 / Wilmington), this protein is ATP-dependent zinc metalloprotease FtsH.